The following is a 167-amino-acid chain: Small ribosomal subunit protein uS5 (167 aa).

Residues 12-75 form the S5 DRBM domain; sequence LQEKLIAVNR…EKARRNMVTV (64 aa).

Belongs to the universal ribosomal protein uS5 family. Part of the 30S ribosomal subunit. Contacts proteins S4 and S8.

Functionally, with S4 and S12 plays an important role in translational accuracy. Located at the back of the 30S subunit body where it stabilizes the conformation of the head with respect to the body. In Shewanella sp. (strain W3-18-1), this protein is Small ribosomal subunit protein uS5.